The primary structure comprises 208 residues: Recombination protein RecR (208 aa).

The C4-type zinc finger occupies 60-75; sequence CKVCHNICDDEVCSIC. The Toprim domain occupies 83 to 178; that stretch reads SLVCVVENIK…RISVIARGVS (96 aa).

The protein belongs to the RecR family.

May play a role in DNA repair. It seems to be involved in an RecBC-independent recombinational process of DNA repair. It may act with RecF and RecO. This Parabacteroides distasonis (strain ATCC 8503 / DSM 20701 / CIP 104284 / JCM 5825 / NCTC 11152) protein is Recombination protein RecR.